The sequence spans 93 residues: Aspartyl/glutamyl-tRNA(Asn/Gln) amidotransferase subunit C (93 aa).

The protein belongs to the GatC family. Heterotrimer of A, B and C subunits.

The enzyme catalyses L-glutamyl-tRNA(Gln) + L-glutamine + ATP + H2O = L-glutaminyl-tRNA(Gln) + L-glutamate + ADP + phosphate + H(+). It carries out the reaction L-aspartyl-tRNA(Asn) + L-glutamine + ATP + H2O = L-asparaginyl-tRNA(Asn) + L-glutamate + ADP + phosphate + 2 H(+). Functionally, allows the formation of correctly charged Asn-tRNA(Asn) or Gln-tRNA(Gln) through the transamidation of misacylated Asp-tRNA(Asn) or Glu-tRNA(Gln) in organisms which lack either or both of asparaginyl-tRNA or glutaminyl-tRNA synthetases. The reaction takes place in the presence of glutamine and ATP through an activated phospho-Asp-tRNA(Asn) or phospho-Glu-tRNA(Gln). In Helicobacter pylori (strain HPAG1), this protein is Aspartyl/glutamyl-tRNA(Asn/Gln) amidotransferase subunit C.